The sequence spans 79 residues: Small ribosomal subunit protein bS21 (79 aa).

Basic residues-rich tracts occupy residues 47–59 (RKQA…HLKK) and 69–79 (GVGHRRKKSTT). The tract at residues 47-79 (RKQAAAVKRHLKKISRDVSSRRGVGHRRKKSTT) is disordered.

This sequence belongs to the bacterial ribosomal protein bS21 family.

The sequence is that of Small ribosomal subunit protein bS21 from Legionella pneumophila (strain Paris).